We begin with the raw amino-acid sequence, 141 residues long: Hemoglobin subunit alpha-1 (141 aa).

The 141-residue stretch at 1 to 141 (VLSAADKGNV…VSTVLTSKYR (141 aa)) folds into the Globin domain. His-58 lines the O2 pocket. His-87 is a heme b binding site.

The protein belongs to the globin family. Heterotetramer of two alpha chains and two beta chains. In terms of tissue distribution, red blood cells.

In terms of biological role, involved in oxygen transport from the lung to the various peripheral tissues. The protein is Hemoglobin subunit alpha-1 of Bos mutus grunniens (Wild yak).